The primary structure comprises 177 residues: tRNA (cytidine(56)-2'-O)-methyltransferase (177 aa).

Residues Leu83 and 108 to 112 (GAEKV) each bind S-adenosyl-L-methionine.

It belongs to the aTrm56 family. As to quaternary structure, homodimer.

The protein resides in the cytoplasm. It catalyses the reaction cytidine(56) in tRNA + S-adenosyl-L-methionine = 2'-O-methylcytidine(56) in tRNA + S-adenosyl-L-homocysteine + H(+). Its function is as follows. Specifically catalyzes the AdoMet-dependent 2'-O-ribose methylation of cytidine at position 56 in tRNAs. The polypeptide is tRNA (cytidine(56)-2'-O)-methyltransferase (Nitrosopumilus maritimus (strain SCM1)).